The chain runs to 309 residues: ASC1-like protein 1 (309 aa).

6 helical membrane passes run 27 to 47, 84 to 104, 130 to 150, 156 to 176, 215 to 235, and 260 to 280; these read FFALPLFAVFFLVVRYLLDCF, CVYFLSGEILSLSVTYNEPWF, AVYMYAAGFYTYSIFALMFWE, FGVSMSHHVATVALIVLSYVF, FLLFVVSWVLLRLTYFPFWIL, and YVFNSLLFSLLVLHIYWWVLI. In terms of domain architecture, TLC spans 75 to 289; the sequence is RKFKESAWKC…IYRMLVRQIK (215 aa).

The protein resides in the endoplasmic reticulum membrane. Functionally, mediates resistance to sphinganine-analog mycotoxins (SAMs) by restoring the sphingolipid biosynthesis. Could salvage the transport of GPI-anchored proteins from the endoplasmic reticulum to the Golgi apparatus in ceramides-depleted cells after SAM exposure. The chain is ASC1-like protein 1 from Oryza sativa subsp. japonica (Rice).